A 275-amino-acid polypeptide reads, in one-letter code: Large ribosomal subunit protein uL2c (275 aa).

A disordered region spans residues 225–259 (KNPVDHPHGGGEGRAPIGRSTPVTPWGKPALGRRT).

It belongs to the universal ribosomal protein uL2 family. As to quaternary structure, part of the 50S ribosomal subunit.

The protein localises to the plastid. The protein resides in the cyanelle. In Cyanophora paradoxa, this protein is Large ribosomal subunit protein uL2c (rpl2).